Consider the following 360-residue polypeptide: Chorismate synthase (360 aa).

R46 serves as a coordination point for NADP(+). Residues 122 to 124 (RAS), G282, 297 to 301 (KPTPS), and R324 each bind FMN.

Belongs to the chorismate synthase family. Requires FMNH2 as cofactor.

It carries out the reaction 5-O-(1-carboxyvinyl)-3-phosphoshikimate = chorismate + phosphate. The protein operates within metabolic intermediate biosynthesis; chorismate biosynthesis; chorismate from D-erythrose 4-phosphate and phosphoenolpyruvate: step 7/7. Its function is as follows. Catalyzes the anti-1,4-elimination of the C-3 phosphate and the C-6 proR hydrogen from 5-enolpyruvylshikimate-3-phosphate (EPSP) to yield chorismate, which is the branch point compound that serves as the starting substrate for the three terminal pathways of aromatic amino acid biosynthesis. This reaction introduces a second double bond into the aromatic ring system. The chain is Chorismate synthase from Archaeoglobus fulgidus (strain ATCC 49558 / DSM 4304 / JCM 9628 / NBRC 100126 / VC-16).